The sequence spans 423 residues: 26S proteasome regulatory subunit 6B homolog (423 aa).

207–214 contacts ATP; the sequence is GPPGTGKT.

Belongs to the AAA ATPase family.

Its subcellular location is the cytoplasm. The protein localises to the nucleus. In terms of biological role, the 26S proteasome is involved in the ATP-dependent degradation of ubiquitinated proteins. The regulatory (or ATPase) complex confers ATP dependency and substrate specificity to the 26S complex. The protein is 26S proteasome regulatory subunit 6B homolog (tbpA) of Aspergillus niger.